The following is a 351-amino-acid chain: Protein Wnt-8a (351 aa).

Residues 1 to 24 form the signal peptide; the sequence is MGNLFMLWAALGICCAAFSASAWS. Cys-54 and Cys-65 are joined by a disulfide. An N-linked (GlcNAc...) asparagine glycan is attached at Asn-103. Cystine bridges form between Cys-104/Cys-112, Cys-114/Cys-132, Cys-180/Cys-194, Cys-182/Cys-189, Cys-259/Cys-297, Cys-275/Cys-290, Cys-294/Cys-336, Cys-312/Cys-327, Cys-314/Cys-324, and Cys-319/Cys-320. A lipid anchor (O-palmitoleoyl serine) is attached at Ser-186. Asn-262 and Asn-281 each carry an N-linked (GlcNAc...) asparagine glycan.

Belongs to the Wnt family. As to quaternary structure, forms a soluble 1:1 complex with AFM; this prevents oligomerization and is required for prolonged biological activity. The complex with AFM may represent the physiological form in body fluids. Palmitoleoylation is required for efficient binding to frizzled receptors. Depalmitoleoylation leads to Wnt signaling pathway inhibition. Post-translationally, proteolytic processing by TIKI1 and TIKI2 promotes oxidation and formation of large disulfide-bond oligomers, leading to inactivation of WNT8A.

Its subcellular location is the secreted. The protein resides in the extracellular space. It is found in the extracellular matrix. Ligand for members of the frizzled family of seven transmembrane receptors. Plays a role in embryonic patterning. In Homo sapiens (Human), this protein is Protein Wnt-8a (WNT8A).